The chain runs to 427 residues: UDP-N-acetylglucosamine 1-carboxyvinyltransferase 2 (427 aa).

Residue 19 to 20 (KN) coordinates phosphoenolpyruvate. Residue Arg-91 coordinates UDP-N-acetyl-alpha-D-glucosamine. The active-site Proton donor is Cys-115. Cys-115 is subject to 2-(S-cysteinyl)pyruvic acid O-phosphothioketal. UDP-N-acetyl-alpha-D-glucosamine-binding residues include Asp-307 and Val-329.

The protein belongs to the EPSP synthase family. MurA subfamily.

It localises to the cytoplasm. The catalysed reaction is phosphoenolpyruvate + UDP-N-acetyl-alpha-D-glucosamine = UDP-N-acetyl-3-O-(1-carboxyvinyl)-alpha-D-glucosamine + phosphate. The protein operates within cell wall biogenesis; peptidoglycan biosynthesis. Its function is as follows. Cell wall formation. Adds enolpyruvyl to UDP-N-acetylglucosamine. In Prochlorococcus marinus (strain SARG / CCMP1375 / SS120), this protein is UDP-N-acetylglucosamine 1-carboxyvinyltransferase 2.